Reading from the N-terminus, the 109-residue chain is SSKITSILNPADITKALEQCAAGFHHTAFFKASGLSKKSDAELAEIFNVLDGDQSGYIEVEELKNFLKCFSDGARVLNDKETSNFLAAGDSDGDHKIGVDEFKSMAKMT.

The residue at position 1 (Ser1) is an N-acetylserine. 2 EF-hand domains span residues 38–73 and 77–109; these read KSDAELAEIFNVLDGDQSGYIEVEELKNFLKCFSDG and LNDKETSNFLAAGDSDGDHKIGVDEFKSMAKMT. Residues Asp51, Asp53, Ser55, Tyr57, Glu59, Glu62, Asp90, Asp92, Asp94, Lys96, and Glu101 each coordinate Ca(2+).

It belongs to the parvalbumin family. As to quaternary structure, monomer.

Functionally, in muscle, parvalbumin is thought to be involved in relaxation after contraction. It binds two calcium ions. This is Parvalbumin alpha from Raja clavata (Thornback ray).